The sequence spans 151 residues: Ribosome maturation factor RimP (151 aa).

The protein belongs to the RimP family.

The protein localises to the cytoplasm. Functionally, required for maturation of 30S ribosomal subunits. The chain is Ribosome maturation factor RimP from Vibrio atlanticus (strain LGP32) (Vibrio splendidus (strain Mel32)).